Consider the following 105-residue polypeptide: Large ribosomal subunit protein uL24 (105 aa).

The protein belongs to the universal ribosomal protein uL24 family. As to quaternary structure, part of the 50S ribosomal subunit.

One of two assembly initiator proteins, it binds directly to the 5'-end of the 23S rRNA, where it nucleates assembly of the 50S subunit. Functionally, one of the proteins that surrounds the polypeptide exit tunnel on the outside of the subunit. This Rhizorhabdus wittichii (strain DSM 6014 / CCUG 31198 / JCM 15750 / NBRC 105917 / EY 4224 / RW1) (Sphingomonas wittichii) protein is Large ribosomal subunit protein uL24.